The sequence spans 468 residues: Mitochondrial distribution and morphology protein 10 (468 aa).

Over residues 370–386 the composition is skewed to basic and acidic residues; it reads ERDGLPGIQRDDHDMHH. The segment at 370–394 is disordered; it reads ERDGLPGIQRDDHDMHHHPQRPHAS.

This sequence belongs to the MDM10 family. Component of the ER-mitochondria encounter structure (ERMES) or MDM complex, composed of MMM1, MDM10, MDM12 and MDM34. Associates with the mitochondrial outer membrane sorting assembly machinery SAM(core) complex.

The protein localises to the mitochondrion outer membrane. Component of the ERMES/MDM complex, which serves as a molecular tether to connect the endoplasmic reticulum and mitochondria. Components of this complex are involved in the control of mitochondrial shape and protein biogenesis and may function in phospholipid exchange. MDM10 is involved in the late assembly steps of the general translocase of the mitochondrial outer membrane (TOM complex). Functions in the TOM40-specific route of the assembly of outer membrane beta-barrel proteins, including the association of TOM40 with the receptor TOM22 and small TOM proteins. Can associate with the SAM(core) complex as well as the MDM12-MMM1 complex, both involved in late steps of the major beta-barrel assembly pathway, that is responsible for biogenesis of all outer membrane beta-barrel proteins. May act as a switch that shuttles between both complexes and channels precursor proteins into the TOM40-specific pathway. Plays a role in mitochondrial morphology and in the inheritance of mitochondria. The polypeptide is Mitochondrial distribution and morphology protein 10 (Ajellomyces dermatitidis (strain ER-3 / ATCC MYA-2586) (Blastomyces dermatitidis)).